Here is a 119-residue protein sequence, read N- to C-terminus: Large ribosomal subunit protein uL22c (119 aa).

This sequence belongs to the universal ribosomal protein uL22 family. In terms of assembly, part of the 50S ribosomal subunit.

Its subcellular location is the plastid. It localises to the chloroplast. Its function is as follows. This protein binds specifically to 23S rRNA. Functionally, the globular domain of the protein is located near the polypeptide exit tunnel on the outside of the subunit, while an extended beta-hairpin is found that lines the wall of the exit tunnel in the center of the 70S ribosome. This chain is Large ribosomal subunit protein uL22c (rpl22), found in Chaetosphaeridium globosum (Charophycean green alga).